Here is a 296-residue protein sequence, read N- to C-terminus: 2-methylisocitrate lyase (296 aa).

Residue 45–47 participates in substrate binding; the sequence is SGG. Residues Asp-85 and Asp-87 each contribute to the Mg(2+) site. Substrate-binding positions include 123 to 124, Arg-158, Glu-188, 210 to 212, Arg-241, and Arg-270; these read CG and NIT.

Belongs to the isocitrate lyase/PEP mutase superfamily. Methylisocitrate lyase family. As to quaternary structure, homotetramer; dimer of dimers. It depends on Mg(2+) as a cofactor.

The catalysed reaction is (2S,3R)-3-hydroxybutane-1,2,3-tricarboxylate = pyruvate + succinate. It functions in the pathway organic acid metabolism; propanoate degradation. In terms of biological role, involved in the catabolism of short chain fatty acids (SCFA) via the 2-methylcitrate cycle I (propionate degradation route). Catalyzes the thermodynamically favored C-C bond cleavage of (2R,3S)-2-methylisocitrate to yield pyruvate and succinate via an alpha-carboxy-carbanion intermediate. The sequence is that of 2-methylisocitrate lyase from Escherichia coli (strain K12).